We begin with the raw amino-acid sequence, 101 residues long: uncharacterized protein (101 aa).

This is an uncharacterized protein from Shigella flexneri.